A 606-amino-acid chain; its full sequence is NADH-ubiquinone oxidoreductase chain 5 (606 aa).

14 helical membrane passes run 1–21 (MNMFSSCMITALVILTLPIIM), 43–63 (AFMISMIPTMMFIYSGQETII), 87–107 (MIFVPVALFVTWSIMEFSMWY), 117–137 (FFKYLLLFLITMMVLVTANNM), 140–160 (LFIGWEGVGIMSFLLIGWWYG), 171–191 (AVLYNRIGDVGFIMTMAWFLL), 241–261 (TPVSALLHSSTMVVAGVFLLI), 273–293 (IQTLTLCLGAITTLFTAICAL), 310–330 (LGLMMVTIGINQPYLAFLHIC), 365–385 (VLPFTTTSLIIGSLALTGMPF), 409–429 (LLITLVATSLTAAYSTRIMFF), 457–477 (LLIGSVFAGYIISHSITPTTI), 488–508 (MTALAVTILGFILALELNLTT), and 582–602 (GLIKLYFLSFMLTMILSLLIL).

Belongs to the complex I subunit 5 family. Core subunit of respiratory chain NADH dehydrogenase (Complex I) which is composed of 45 different subunits.

The protein resides in the mitochondrion inner membrane. The catalysed reaction is a ubiquinone + NADH + 5 H(+)(in) = a ubiquinol + NAD(+) + 4 H(+)(out). Functionally, core subunit of the mitochondrial membrane respiratory chain NADH dehydrogenase (Complex I) which catalyzes electron transfer from NADH through the respiratory chain, using ubiquinone as an electron acceptor. Essential for the catalytic activity and assembly of complex I. The sequence is that of NADH-ubiquinone oxidoreductase chain 5 (MT-ND5) from Canis lupus (Gray wolf).